Reading from the N-terminus, the 219-residue chain is Glycerol-3-phosphate acyltransferase 2 (219 aa).

5 consecutive transmembrane segments (helical) span residues 1–21, 55–75, 93–113, 135–155, and 160–180; these read MVFWIAGAVGLAIAYLLGSTP, WPALVVLLVDVLKGVGAVVFA, ALDLQSLEPWAVCLTGLAVLL, VLLAMSWPVGLGAAMVFGVAL, and IVSLSSMLAALTAIALVCGLE.

This sequence belongs to the PlsY family. As to quaternary structure, probably interacts with PlsX.

Its subcellular location is the cell inner membrane. The enzyme catalyses an acyl phosphate + sn-glycerol 3-phosphate = a 1-acyl-sn-glycero-3-phosphate + phosphate. It participates in lipid metabolism; phospholipid metabolism. Its function is as follows. Catalyzes the transfer of an acyl group from acyl-phosphate (acyl-PO(4)) to glycerol-3-phosphate (G3P) to form lysophosphatidic acid (LPA). This enzyme utilizes acyl-phosphate as fatty acyl donor, but not acyl-CoA or acyl-ACP. The polypeptide is Glycerol-3-phosphate acyltransferase 2 (Rhizobium johnstonii (strain DSM 114642 / LMG 32736 / 3841) (Rhizobium leguminosarum bv. viciae)).